Consider the following 257-residue polypeptide: Putative B3 domain-containing protein At2g27410 (257 aa).

The interval 5–50 (ARTTKINHFRGTSTTQNPNRGLEPSPSSYVTRRSKEKRPINVEKRS) is disordered. The span at 8-35 (TKINHFRGTSTTQNPNRGLEPSPSSYVT) shows a compositional bias: polar residues. The segment at residues 115-209 (TPDFLTEDET…KLCFALTPKN (95 aa)) is a DNA-binding region (TF-B3). Residues 212 to 257 (RGNSLPGGDGASTSGESGQVPLPIPPARYSSNSGQGCSGESSSSSS) form a disordered region. The segment covering 241 to 257 (SSNSGQGCSGESSSSSS) has biased composition (low complexity).

The protein resides in the nucleus. This Arabidopsis thaliana (Mouse-ear cress) protein is Putative B3 domain-containing protein At2g27410.